We begin with the raw amino-acid sequence, 352 residues long: Protein RecA (352 aa).

ATP is bound at residue 65–72 (GPESSGKT).

Belongs to the RecA family.

The protein localises to the cytoplasm. Functionally, can catalyze the hydrolysis of ATP in the presence of single-stranded DNA, the ATP-dependent uptake of single-stranded DNA by duplex DNA, and the ATP-dependent hybridization of homologous single-stranded DNAs. It interacts with LexA causing its activation and leading to its autocatalytic cleavage. This is Protein RecA from Pseudomonas fluorescens (strain SBW25).